Reading from the N-terminus, the 322-residue chain is RNA-binding protein KhpB (322 aa).

The interval 3-52 (VFEGNTVAAAIAAGLKQLHRTRDQVEVEVIAEAKKGFLGLGKHPAQVRLT) is jag_N domain. Positions 58–82 (AAPATTPTSATATAQQSVATESTTA) are enriched in low complexity. The segment at 58–162 (AAPATTPTSA…AADQSQTPRT (105 aa)) is disordered. Threonine 89 is modified (phosphothreonine). The span at 89-99 (TVQTPKSTPTR) shows a compositional bias: polar residues. The span at 100 to 129 (QAKTSQATTSAAKPATSKAKAVAKPASMAV) shows a compositional bias: low complexity. Residues 141 to 161 (SKPATTSKTKSVAADQSQTPR) are compositionally biased toward polar residues. The KH domain occupies 174-251 (ETAVRALCDY…ASHVNVVLDV (78 aa)). The R3H domain maps to 256-322 (ERRAATLKRL…HRAVVVAIRK (67 aa)).

Forms a complex with KhpA.

Its subcellular location is the cytoplasm. Functionally, a probable RNA chaperone. Forms a complex with KhpA which binds to cellular RNA and controls its expression. Plays a role in peptidoglycan (PG) homeostasis and cell length regulation. Necessary for correct cell elongation. This is RNA-binding protein KhpB from Lactiplantibacillus plantarum (strain ATCC BAA-793 / NCIMB 8826 / WCFS1) (Lactobacillus plantarum).